The following is a 225-amino-acid chain: UPF0758 protein XOO0495 (225 aa).

One can recognise an MPN domain in the interval 102–224; sequence ALSDPPSVGR…PVSLAERGWL (123 aa). Positions 173, 175, and 186 each coordinate Zn(2+). A JAMM motif motif is present at residues 173–186; sequence HNHPSGNPEPSKAD.

Belongs to the UPF0758 family.

The polypeptide is UPF0758 protein XOO0495 (Xanthomonas oryzae pv. oryzae (strain KACC10331 / KXO85)).